A 557-amino-acid polypeptide reads, in one-letter code: Potassium-transporting ATPase potassium-binding subunit (557 aa).

Helical transmembrane passes span Gly-5–Ser-25, Leu-63–Gly-83, Gly-132–Ile-152, Leu-170–Ile-190, Phe-253–Val-273, Leu-283–Val-303, Val-329–Ala-349, Ala-356–Val-376, Gly-379–Gly-399, Leu-416–Met-436, Leu-484–Ala-504, and Leu-526–Ala-546.

It belongs to the KdpA family. As to quaternary structure, the system is composed of three essential subunits: KdpA, KdpB and KdpC.

It localises to the cell inner membrane. Part of the high-affinity ATP-driven potassium transport (or Kdp) system, which catalyzes the hydrolysis of ATP coupled with the electrogenic transport of potassium into the cytoplasm. This subunit binds the periplasmic potassium ions and delivers the ions to the membrane domain of KdpB through an intramembrane tunnel. The sequence is that of Potassium-transporting ATPase potassium-binding subunit from Escherichia coli (strain SE11).